A 456-amino-acid chain; its full sequence is Enolase (456 aa).

(2R)-2-phosphoglycerate is bound at residue Q164. Residue E207 is the Proton donor of the active site. Residues D244, E287, and D314 each coordinate Mg(2+). The (2R)-2-phosphoglycerate site is built by K339, R368, S369, and K390. K339 functions as the Proton acceptor in the catalytic mechanism.

Belongs to the enolase family. Component of the RNA degradosome, a multiprotein complex involved in RNA processing and mRNA degradation. Mg(2+) serves as cofactor.

It is found in the cytoplasm. Its subcellular location is the secreted. The protein resides in the cell surface. The catalysed reaction is (2R)-2-phosphoglycerate = phosphoenolpyruvate + H2O. The protein operates within carbohydrate degradation; glycolysis; pyruvate from D-glyceraldehyde 3-phosphate: step 4/5. Its function is as follows. Catalyzes the reversible conversion of 2-phosphoglycerate (2-PG) into phosphoenolpyruvate (PEP). It is essential for the degradation of carbohydrates via glycolysis. The protein is Enolase of Francisella tularensis subsp. tularensis (strain FSC 198).